The following is a 169-amino-acid chain: MEWLEVAKIANTHGLKGELKLLASTDFPEQRFKVGNEVFLESNGIYTPFMISSYRKHKQFIMVTFKGMQHINDVEKYKGLKLYVHPEALQELGEHEFYYHEIIGCTVFDGEDEIGVVSEILETGANDVWTIKRPGKKDVLIPYIEQVVASIDVEAKRIQITPLPGLIEG.

A PRC barrel domain is found at G93–L166.

This sequence belongs to the RimM family. In terms of assembly, binds ribosomal protein uS19.

Its subcellular location is the cytoplasm. In terms of biological role, an accessory protein needed during the final step in the assembly of 30S ribosomal subunit, possibly for assembly of the head region. Essential for efficient processing of 16S rRNA. May be needed both before and after RbfA during the maturation of 16S rRNA. It has affinity for free ribosomal 30S subunits but not for 70S ribosomes. The chain is Ribosome maturation factor RimM from Exiguobacterium sibiricum (strain DSM 17290 / CCUG 55495 / CIP 109462 / JCM 13490 / 255-15).